The primary structure comprises 201 residues: 3-isopropylmalate dehydratase small subunit (201 aa).

This sequence belongs to the LeuD family. LeuD type 1 subfamily. Heterodimer of LeuC and LeuD.

The catalysed reaction is (2R,3S)-3-isopropylmalate = (2S)-2-isopropylmalate. The protein operates within amino-acid biosynthesis; L-leucine biosynthesis; L-leucine from 3-methyl-2-oxobutanoate: step 2/4. Functionally, catalyzes the isomerization between 2-isopropylmalate and 3-isopropylmalate, via the formation of 2-isopropylmaleate. In Paramagnetospirillum magneticum (strain ATCC 700264 / AMB-1) (Magnetospirillum magneticum), this protein is 3-isopropylmalate dehydratase small subunit.